Here is a 598-residue protein sequence, read N- to C-terminus: Auxin response factor 22 (598 aa).

Positions 124 to 226 (NSFTKVLTAS…ELRVGIRRAG (103 aa)) form a DNA-binding region, TF-B3. The PB1 domain occupies 509–590 (RTCTKVQMQG…MVKKILIFKR (82 aa)).

Belongs to the ARF family. As to quaternary structure, homodimers and heterodimers.

The protein resides in the nucleus. In terms of biological role, auxin response factors (ARFs) are transcriptional factors that bind specifically to the DNA sequence 5'-TGTCTC-3' found in the auxin-responsive promoter elements (AuxREs). Could act as transcriptional activator or repressor. Formation of heterodimers with Aux/IAA proteins may alter their ability to modulate early auxin response genes expression. The protein is Auxin response factor 22 (ARF22) of Arabidopsis thaliana (Mouse-ear cress).